Reading from the N-terminus, the 286-residue chain is Homoserine kinase (286 aa).

Position 78 to 88 (78 to 88 (PLARGLGSSSS)) interacts with ATP.

This sequence belongs to the GHMP kinase family. Homoserine kinase subfamily.

It is found in the cytoplasm. It carries out the reaction L-homoserine + ATP = O-phospho-L-homoserine + ADP + H(+). It functions in the pathway amino-acid biosynthesis; L-threonine biosynthesis; L-threonine from L-aspartate: step 4/5. In terms of biological role, catalyzes the ATP-dependent phosphorylation of L-homoserine to L-homoserine phosphate. In Streptococcus thermophilus (strain CNRZ 1066), this protein is Homoserine kinase.